Reading from the N-terminus, the 171-residue chain is UPF0303 protein YPN_2129 (171 aa).

It belongs to the UPF0303 family.

The polypeptide is UPF0303 protein YPN_2129 (Yersinia pestis bv. Antiqua (strain Nepal516)).